An 87-amino-acid chain; its full sequence is Exendin-3 (87 aa).

A signal peptide spans 1 to 21 (MKIILWLCVFGLFLATLFPVS). Residues 22 to 45 (WQMPVESGLSSEDSASSESFASKI) constitute a propeptide that is removed on maturation. S86 is modified (serine amide).

Belongs to the glucagon family. In terms of tissue distribution, expressed by the venom gland.

It localises to the secreted. Its function is as follows. Stimulates vasoactive intestinal peptide (VIP) receptors in high concentrations (&gt;100 nM), resulting in both an increase in cAMP and amylase secretion from pancreatic acini, although at low concentrations (between 0.3 and 3 nM) it increases cAMP without stimulating amylase release. Stimulates the GLP-1 receptor (GLP1R). Induces hypotension that is mediated by relaxation of cardiac smooth muscle. This Heloderma horridum horridum (Mexican beaded lizard) protein is Exendin-3.